The sequence spans 447 residues: Glutamyl-tRNA(Gln) amidotransferase subunit A (447 aa).

Residues Lys-50 and Ser-125 each act as charge relay system in the active site. Ser-149 (acyl-ester intermediate) is an active-site residue.

Belongs to the amidase family. GatA subfamily. As to quaternary structure, heterotrimer of A, B and C subunits.

The enzyme catalyses L-glutamyl-tRNA(Gln) + L-glutamine + ATP + H2O = L-glutaminyl-tRNA(Gln) + L-glutamate + ADP + phosphate + H(+). Functionally, allows the formation of correctly charged Gln-tRNA(Gln) through the transamidation of misacylated Glu-tRNA(Gln) in organisms which lack glutaminyl-tRNA synthetase. The reaction takes place in the presence of glutamine and ATP through an activated gamma-phospho-Glu-tRNA(Gln). This Sulfurimonas denitrificans (strain ATCC 33889 / DSM 1251) (Thiomicrospira denitrificans (strain ATCC 33889 / DSM 1251)) protein is Glutamyl-tRNA(Gln) amidotransferase subunit A.